A 125-amino-acid chain; its full sequence is Prefoldin subunit beta (125 aa).

This sequence belongs to the prefoldin subunit beta family. As to quaternary structure, heterohexamer of two alpha and four beta subunits.

Its subcellular location is the cytoplasm. Molecular chaperone capable of stabilizing a range of proteins. Seems to fulfill an ATP-independent, HSP70-like function in archaeal de novo protein folding. This is Prefoldin subunit beta (pfdB) from Sulfurisphaera tokodaii (strain DSM 16993 / JCM 10545 / NBRC 100140 / 7) (Sulfolobus tokodaii).